A 491-amino-acid polypeptide reads, in one-letter code: Glucose-6-phosphate 1-dehydrogenase (491 aa).

NADP(+) is bound by residues Arg49, 91 to 92 (DV), and Lys146. Substrate-binding residues include His176, Lys180, Glu214, and Asp233. His238 acts as the Proton acceptor in catalysis. Residues Lys338 and Lys343 each contribute to the substrate site.

It belongs to the glucose-6-phosphate dehydrogenase family.

The catalysed reaction is D-glucose 6-phosphate + NADP(+) = 6-phospho-D-glucono-1,5-lactone + NADPH + H(+). Its pathway is carbohydrate degradation; pentose phosphate pathway; D-ribulose 5-phosphate from D-glucose 6-phosphate (oxidative stage): step 1/3. Catalyzes the oxidation of glucose 6-phosphate to 6-phosphogluconolactone. In Buchnera aphidicola subsp. Acyrthosiphon pisum (strain APS) (Acyrthosiphon pisum symbiotic bacterium), this protein is Glucose-6-phosphate 1-dehydrogenase.